The primary structure comprises 90 residues: Probable Fe(2+)-trafficking protein (90 aa).

Belongs to the Fe(2+)-trafficking protein family.

Its function is as follows. Could be a mediator in iron transactions between iron acquisition and iron-requiring processes, such as synthesis and/or repair of Fe-S clusters in biosynthetic enzymes. In Idiomarina loihiensis (strain ATCC BAA-735 / DSM 15497 / L2-TR), this protein is Probable Fe(2+)-trafficking protein.